The sequence spans 166 residues: Large ribosomal subunit protein uL10 (166 aa).

The protein belongs to the universal ribosomal protein uL10 family. Part of the ribosomal stalk of the 50S ribosomal subunit. The N-terminus interacts with L11 and the large rRNA to form the base of the stalk. The C-terminus forms an elongated spine to which L12 dimers bind in a sequential fashion forming a multimeric L10(L12)X complex.

In terms of biological role, forms part of the ribosomal stalk, playing a central role in the interaction of the ribosome with GTP-bound translation factors. The chain is Large ribosomal subunit protein uL10 from Enterococcus faecalis (strain ATCC 700802 / V583).